We begin with the raw amino-acid sequence, 422 residues long: Interleukin-11 receptor subunit alpha (422 aa).

The first 22 residues, 1–22 (MSSSCSGLSRVLVAVATALVSA), serve as a signal peptide directing secretion. Residues 24–370 (SPCPQAWGPP…DSVEQVAVLV (347 aa)) are Extracellular-facing. Residues 27-110 (PQAWGPPGVQ…LGGTVTLQLG (84 aa)) form the Ig-like C2-type domain. 3 cysteine pairs are disulfide-bonded: C48–C94, C120–C130, and C170–C180. Fibronectin type-III domains are found at residues 112–219 (PPAR…LRPD) and 220–317 (PPQG…TPST). N127 is a glycosylation site (N-linked (GlcNAc...) asparagine). The N-linked (GlcNAc...) asparagine glycan is linked to N194. Positions 304–308 (WSTWS) match the WSXWS motif motif. A disordered region spans residues 335–355 (EVEPQVDSPAPPRPSLQPHPR). The chain crosses the membrane as a helical span at residues 371–391 (SLGILSFLGLVAGALALGLWL). At 392 to 422 (RLRRGGKDGSPKPGFLASVIPVDRHPGAPNL) the chain is on the cytoplasmic side.

Belongs to the type I cytokine receptor family. Type 3 subfamily. In terms of assembly, on IL11 binding, forms a multimer complex with IL6ST/gp130. In terms of processing, a short soluble form is also released from the membrane by proteolysis. The sIL11RA is formed either by limited proteolysis of membrane-bound receptors, a process referred to as ectodomain shedding, or directly secreted from the cells after alternative mRNA splicing. mIL11RA is cleaved by the proteases ADAM10, ELANE and PRTN3.

It localises to the membrane. Its subcellular location is the secreted. Receptor for interleukin-11 (IL11). The receptor systems for IL6, LIF, OSM, CNTF, IL11 and CT1 can utilize IL6ST for initiating signal transmission. The IL11/IL11RA/IL6ST complex may be involved in the control of proliferation and/or differentiation of skeletogenic progenitor or other mesenchymal cells. Essential for the normal development of craniofacial bones and teeth. Restricts suture fusion and tooth number. In terms of biological role, soluble form of IL11 receptor (sIL11RA) that acts as an agonist of IL11 activity. The IL11:sIL11RA complex binds to IL6ST/gp130 on cell surfaces and induces signaling also on cells that do not express membrane-bound IL11RA in a process called IL11 trans-signaling. This is Interleukin-11 receptor subunit alpha (IL11RA) from Pongo abelii (Sumatran orangutan).